Reading from the N-terminus, the 22-residue chain is 2.4 kDa venom peptide (22 aa).

Contains 2 disulfide bonds. As to expression, expressed by the venom gland.

It is found in the secreted. In terms of biological role, not lethal to mice by intraperitoneal or intracerebroventricular injections in doses up to 150 micrograms. This chain is 2.4 kDa venom peptide, found in Heterometrus spinifer (Asia giant forest scorpion).